The chain runs to 260 residues: Transmembrane protein 106C (260 aa).

G2 carries N-myristoyl glycine lipidation. Residues 85–105 traverse the membrane as a helical segment; it reads YVLLSVLLCLLASGLVFFFLF. A glycan (N-linked (GlcNAc...) asparagine) is linked at N184. The chain crosses the membrane as a helical span at residues 196–216; it reads SYVYFYCTLPAIRVHNIVIFM.

This sequence belongs to the TMEM106 family. In terms of assembly, interacts with TMEM106B.

It is found in the endoplasmic reticulum membrane. It localises to the membrane. This is Transmembrane protein 106C (Tmem106c) from Mus musculus (Mouse).